The following is a 434-amino-acid chain: Maltoporin (434 aa).

The first 25 residues, 1 to 25 (MKMKAKWLPIAAAVTAALASQAAFA), serve as a signal peptide directing secretion.

The protein belongs to the porin LamB (TC 1.B.3) family. As to quaternary structure, homotrimer formed of three 18-stranded antiparallel beta-barrels, containing three independent channels.

The protein localises to the cell outer membrane. It carries out the reaction beta-maltose(in) = beta-maltose(out). Functionally, involved in the transport of maltose and maltodextrins. The chain is Maltoporin from Aeromonas hydrophila.